The primary structure comprises 286 residues: Bifunctional protein FolD (286 aa).

NADP(+) is bound by residues 165 to 167 (GRS), S190, and V231.

The protein belongs to the tetrahydrofolate dehydrogenase/cyclohydrolase family. As to quaternary structure, homodimer.

It carries out the reaction (6R)-5,10-methylene-5,6,7,8-tetrahydrofolate + NADP(+) = (6R)-5,10-methenyltetrahydrofolate + NADPH. The enzyme catalyses (6R)-5,10-methenyltetrahydrofolate + H2O = (6R)-10-formyltetrahydrofolate + H(+). Its pathway is one-carbon metabolism; tetrahydrofolate interconversion. In terms of biological role, catalyzes the oxidation of 5,10-methylenetetrahydrofolate to 5,10-methenyltetrahydrofolate and then the hydrolysis of 5,10-methenyltetrahydrofolate to 10-formyltetrahydrofolate. The protein is Bifunctional protein FolD of Bacillus mycoides (strain KBAB4) (Bacillus weihenstephanensis).